We begin with the raw amino-acid sequence, 313 residues long: Ribosomal RNA small subunit methyltransferase H (313 aa).

S-adenosyl-L-methionine contacts are provided by residues 35–37 (GGH), D55, F79, D100, and Q107.

The protein belongs to the methyltransferase superfamily. RsmH family.

The protein resides in the cytoplasm. It catalyses the reaction cytidine(1402) in 16S rRNA + S-adenosyl-L-methionine = N(4)-methylcytidine(1402) in 16S rRNA + S-adenosyl-L-homocysteine + H(+). Specifically methylates the N4 position of cytidine in position 1402 (C1402) of 16S rRNA. The sequence is that of Ribosomal RNA small subunit methyltransferase H from Burkholderia pseudomallei (strain K96243).